We begin with the raw amino-acid sequence, 72 residues long: Translation initiation factor IF-1 (72 aa).

One can recognise an S1-like domain in the interval 1-72 (MAKDDVIEVE…TRGRITYRFK (72 aa)).

The protein belongs to the IF-1 family. In terms of assembly, component of the 30S ribosomal translation pre-initiation complex which assembles on the 30S ribosome in the order IF-2 and IF-3, IF-1 and N-formylmethionyl-tRNA(fMet); mRNA recruitment can occur at any time during PIC assembly.

The protein resides in the cytoplasm. Its function is as follows. One of the essential components for the initiation of protein synthesis. Stabilizes the binding of IF-2 and IF-3 on the 30S subunit to which N-formylmethionyl-tRNA(fMet) subsequently binds. Helps modulate mRNA selection, yielding the 30S pre-initiation complex (PIC). Upon addition of the 50S ribosomal subunit IF-1, IF-2 and IF-3 are released leaving the mature 70S translation initiation complex. This Streptococcus pneumoniae serotype 2 (strain D39 / NCTC 7466) protein is Translation initiation factor IF-1.